We begin with the raw amino-acid sequence, 398 residues long: MALLRRPTVSTDLENNDTGVNSKPKSHVTIRRAVLEEIGNRVTTRAIQVAKKAQNTKVPVPPTKTTNVNKHPKPTASVKPVQMDVLAPKGPSPTPQDISMKEENLCQAFSDALLCKIEDIDTEDWENPQLCSDYVKDIYQYLRQLEVLQSINPHFLDGRDINGRMRAILVDWLVQVHSKFRLLQETLYMCVAVMDRYLQVQPVSRKKLQLVGITALLLASKYEEMFSPNIEDFVYITDNAYTSSQIREMETLILKELKFELGRPLPLHFLRRASKAGEVDVEQHTLAKYLMELTLVDYDMVHYHPSKVAAAASCLSQKVLGQGKWNLKQQYYTGYTESEVLEVMRHMAKNVVRVNENMTKFTAIKNKYASSKLLKISTIPQLNSKAIQELASPLLGRS.

Disordered stretches follow at residues 1–26 and 53–76; these read MALLRRPTVSTDLENNDTGVNSKPKS and AQNTKVPVPPTKTTNVNKHPKPTA. At Thr8 the chain carries Phosphothreonine. The span at 8 to 23 shows a compositional bias: polar residues; sequence TVSTDLENNDTGVNSK. Positions 55–69 are enriched in low complexity; that stretch reads NTKVPVPPTKTTNVN. Ser77 and Ser92 each carry phosphoserine. Residue Thr94 is modified to Phosphothreonine. Phosphoserine is present on residues Ser99, Ser392, and Ser398.

The protein belongs to the cyclin family. Cyclin AB subfamily. In terms of assembly, interacts with the CDK1 protein kinase to form a serine/threonine kinase holoenzyme complex also known as maturation promoting factor (MPF). The cyclin subunit imparts substrate specificity to the complex.

Essential for the control of the cell cycle at the G2/M (mitosis) transition. This is G2/mitotic-specific cyclin-B2 (CCNB2) from Bos taurus (Bovine).